The sequence spans 296 residues: Diaminopimelate epimerase (296 aa).

Substrate contacts are provided by N17, Q49, and N69. C78 functions as the Proton donor in the catalytic mechanism. Substrate is bound by residues G79 to N80, N171, N205, and E223 to R224. C232 (proton acceptor) is an active-site residue. Substrate is bound at residue G233–T234.

The protein belongs to the diaminopimelate epimerase family. In terms of assembly, homodimer.

The protein localises to the cytoplasm. The catalysed reaction is (2S,6S)-2,6-diaminopimelate = meso-2,6-diaminopimelate. It participates in amino-acid biosynthesis; L-lysine biosynthesis via DAP pathway; DL-2,6-diaminopimelate from LL-2,6-diaminopimelate: step 1/1. Its function is as follows. Catalyzes the stereoinversion of LL-2,6-diaminopimelate (L,L-DAP) to meso-diaminopimelate (meso-DAP), a precursor of L-lysine and an essential component of the bacterial peptidoglycan. The polypeptide is Diaminopimelate epimerase (Methylorubrum populi (strain ATCC BAA-705 / NCIMB 13946 / BJ001) (Methylobacterium populi)).